The following is an 894-amino-acid chain: Alpha-actinin-2 (894 aa).

The tract at residues 1–254 (MNQIEPGVQY…IMTYVSCFYH (254 aa)) is actin-binding. Calponin-homology (CH) domains follow at residues 38 to 142 (KQQR…LRFA) and 151 to 257 (TSAK…HAFA). The residue at position 237 (Thr-237) is a Phosphothreonine. Spectrin repeat units follow at residues 281–391 (RLME…WLLN), 401–506 (HLAE…ALER), 516–627 (QLHL…SLQE), and 637–740 (RLRR…EVET). EF-hand domains follow at residues 753 to 788 (EQMN…MGYD) and 789 to 824 (LGEA…ETAD). Positions 766, 770, 777, 802, 804, and 808 each coordinate Ca(2+).

The protein belongs to the alpha-actinin family. Homodimer; antiparallel. Also forms heterodimers with ACTN3. Interacts with ADAM12, MYOZ1, MYOZ2 and MYOZ3. Interacts via its C-terminal region with the LDB3 PDZ domain. Interacts with XIRP2. Interacts with DST isoform 1 (via N-terminus). Interacts with PARVB. Interacts with SYNPO2. Ubiquitinated by FBXL22, leading to proteasomal degradation. As to expression, expressed in both skeletal and cardiac muscle.

It localises to the cytoplasm. The protein resides in the myofibril. It is found in the sarcomere. Its subcellular location is the z line. Functionally, F-actin cross-linking protein which is thought to anchor actin to a variety of intracellular structures. This is a bundling protein. The chain is Alpha-actinin-2 (ACTN2) from Homo sapiens (Human).